A 213-amino-acid polypeptide reads, in one-letter code: Negative modulator of initiation of replication (213 aa).

3 interaction with DNA regions span residues 116–117, 145–149, and 179–185; these read AV, RTRVY, and NTNSGRK.

It belongs to the SeqA family. Homodimer. Polymerizes to form helical filaments.

It localises to the cytoplasm. Negative regulator of replication initiation, which contributes to regulation of DNA replication and ensures that replication initiation occurs exactly once per chromosome per cell cycle. Binds to pairs of hemimethylated GATC sequences in the oriC region, thus preventing assembly of replication proteins and re-initiation at newly replicated origins. Repression is relieved when the region becomes fully methylated. The chain is Negative modulator of initiation of replication from Haemophilus parainfluenzae (strain T3T1).